Here is a 303-residue protein sequence, read N- to C-terminus: tRNA pseudouridine synthase A (303 aa).

Aspartate 59 serves as the catalytic Nucleophile. Tyrosine 128 is a binding site for substrate.

The protein belongs to the tRNA pseudouridine synthase TruA family. As to quaternary structure, homodimer.

The catalysed reaction is uridine(38/39/40) in tRNA = pseudouridine(38/39/40) in tRNA. In terms of biological role, formation of pseudouridine at positions 38, 39 and 40 in the anticodon stem and loop of transfer RNAs. This Bifidobacterium longum (strain DJO10A) protein is tRNA pseudouridine synthase A.